The primary structure comprises 395 residues: Glyceraldehyde-3-phosphate dehydrogenase, testis-specific (395 aa).

Residues 1-60 are testis-specific N-terminal extension; the sequence is MSKRDIVLTNVTVVQLLRQPCPEPRVEAEPEPPAQPQPQPEPIKEEVPPPPPPPPAPKKV. The interval 19 to 59 is disordered; the sequence is QPCPEPRVEAEPEPPAQPQPQPEPIKEEVPPPPPPPPAPKK. Composition is skewed to pro residues over residues 31–41 and 48–57; these read EPPAQPQPQPE and PPPPPPPPAP. Residues 72 to 73, aspartate 93, and lysine 138 each bind NAD(+); that span reads RI. D-glyceraldehyde 3-phosphate is bound by residues 210–212, threonine 241, 270–271, and arginine 293; these read SCT and TG. Cysteine 211 (nucleophile) is an active-site residue. Asparagine 375 contacts NAD(+).

It belongs to the glyceraldehyde-3-phosphate dehydrogenase family. In terms of assembly, homotetramer.

Its subcellular location is the cytoplasm. The enzyme catalyses D-glyceraldehyde 3-phosphate + phosphate + NAD(+) = (2R)-3-phospho-glyceroyl phosphate + NADH + H(+). The protein operates within carbohydrate degradation; glycolysis; pyruvate from D-glyceraldehyde 3-phosphate: step 1/5. Its function is as follows. May play an important role in regulating the switch between different pathways for energy production during spermiogenesis and in the spermatozoon. Required for sperm motility and male fertility. The sequence is that of Glyceraldehyde-3-phosphate dehydrogenase, testis-specific (GAPDHS) from Bos taurus (Bovine).